We begin with the raw amino-acid sequence, 142 residues long: Midkine-A (142 aa).

The first 20 residues, 1–20 (MELRAFCVILLITVLAVSSQ), serve as a signal peptide directing secretion. Cystine bridges form between Cys36–Cys60, Cys44–Cys69, Cys51–Cys73, Cys83–Cys115, and Cys93–Cys125.

This sequence belongs to the pleiotrophin family. In terms of tissue distribution, expression at the mid-gastrula stage begins in the neural anlage, and becomes increasingly prominent in the central nervous system and head mesenchyme during neurula stages. Although the mRNA is localized to the developing central nervous system (CNS), the protein is deposited at the neuromuscular junction (NMJ). In the tailbud stage embryo, expressed in the head and tail regions as well as in the CNS. In adults, expression is highest in the brain, eye and bone, with lower expression in the heart and lung. Not expressed in the ovary.

It is found in the secreted. In terms of biological role, secreted protein that functions as a cytokine and growth factor and mediates its signal through cell-surface proteoglycan and non-proteoglycan receptors. Binds cell-surface proteoglycan receptors via their chondroitin sulfate (CS) groups. Thereby regulates many processes like inflammatory response, cell proliferation, cell adhesion, cell growth, cell survival, tissue regeneration, cell differentiation and cell migration. Inhibits mesoderm formation and promotes neural formation during development. Plays a role in development of the neuromuscular junction (NMJ). Has antibacterial activity against both Gram-positive and Gram-negative bacteria. The polypeptide is Midkine-A (mdk-a) (Xenopus laevis (African clawed frog)).